Consider the following 176-residue polypeptide: Large ribosomal subunit protein uL10 (176 aa).

It belongs to the universal ribosomal protein uL10 family. Part of the ribosomal stalk of the 50S ribosomal subunit. The N-terminus interacts with L11 and the large rRNA to form the base of the stalk. The C-terminus forms an elongated spine to which L12 dimers bind in a sequential fashion forming a multimeric L10(L12)X complex.

Functionally, forms part of the ribosomal stalk, playing a central role in the interaction of the ribosome with GTP-bound translation factors. The chain is Large ribosomal subunit protein uL10 (rplJ) from Streptomyces coelicolor (strain ATCC BAA-471 / A3(2) / M145).